Reading from the N-terminus, the 103-residue chain is Large ribosomal subunit protein bL21 (103 aa).

The protein belongs to the bacterial ribosomal protein bL21 family. Part of the 50S ribosomal subunit. Contacts protein L20.

In terms of biological role, this protein binds to 23S rRNA in the presence of protein L20. This chain is Large ribosomal subunit protein bL21, found in Desulfitobacterium hafniense (strain DSM 10664 / DCB-2).